The primary structure comprises 530 residues: Bifunctional purine biosynthesis protein PurH (530 aa).

The 149-residue stretch at 2 to 150 (TDHPRRVTRA…KNHDDVAVVV (149 aa)) folds into the MGS-like domain.

This sequence belongs to the PurH family.

The catalysed reaction is (6R)-10-formyltetrahydrofolate + 5-amino-1-(5-phospho-beta-D-ribosyl)imidazole-4-carboxamide = 5-formamido-1-(5-phospho-D-ribosyl)imidazole-4-carboxamide + (6S)-5,6,7,8-tetrahydrofolate. The enzyme catalyses IMP + H2O = 5-formamido-1-(5-phospho-D-ribosyl)imidazole-4-carboxamide. It participates in purine metabolism; IMP biosynthesis via de novo pathway; 5-formamido-1-(5-phospho-D-ribosyl)imidazole-4-carboxamide from 5-amino-1-(5-phospho-D-ribosyl)imidazole-4-carboxamide (10-formyl THF route): step 1/1. It functions in the pathway purine metabolism; IMP biosynthesis via de novo pathway; IMP from 5-formamido-1-(5-phospho-D-ribosyl)imidazole-4-carboxamide: step 1/1. This is Bifunctional purine biosynthesis protein PurH from Bradyrhizobium diazoefficiens (strain JCM 10833 / BCRC 13528 / IAM 13628 / NBRC 14792 / USDA 110).